The primary structure comprises 152 residues: uncharacterized protein (152 aa).

Residues 12 to 34 (ALLYLGGGLLAMIYGLITFFMAF) traverse the membrane as a helical segment.

To B.subtilis YfjD.

The protein resides in the membrane. This is an uncharacterized protein from Bacillus subtilis (strain 168).